A 50-amino-acid chain; its full sequence is MATKKAALACSVCGSRNYSKSVSEGKRGERLEINKFCKYCNQYTLHKETK.

This sequence belongs to the bacterial ribosomal protein bL33 family.

This is Large ribosomal subunit protein bL33B (rpmG2) from Enterococcus faecalis (strain ATCC 700802 / V583).